We begin with the raw amino-acid sequence, 223 residues long: Adenylate kinase (223 aa).

10-15 (GSGKGT) serves as a coordination point for ATP. An NMP region spans residues 30 to 59 (ESGAIFREHIGGGTELGKQAKAFIERGDLV). AMP is bound by residues S31, R36, 57–59 (DLV), 84–87 (GFPR), and Q91. The segment at 125 to 164 (GRRLCKNDNNHPNNIFIDAIKPNGDVCRVCGGELSARSDD) is LID. R126 provides a ligand contact to ATP. AMP-binding residues include R161 and R173. ATP is bound at residue G209.

It belongs to the adenylate kinase family. Monomer.

It is found in the cytoplasm. It carries out the reaction AMP + ATP = 2 ADP. It functions in the pathway purine metabolism; AMP biosynthesis via salvage pathway; AMP from ADP: step 1/1. Functionally, catalyzes the reversible transfer of the terminal phosphate group between ATP and AMP. Plays an important role in cellular energy homeostasis and in adenine nucleotide metabolism. In Nitratidesulfovibrio vulgaris (strain ATCC 29579 / DSM 644 / CCUG 34227 / NCIMB 8303 / VKM B-1760 / Hildenborough) (Desulfovibrio vulgaris), this protein is Adenylate kinase.